Consider the following 593-residue polypeptide: MTPVGMDRKSLSLLILIVLLGLCIRLQNFGEIFDSRIYYYGYDPYYHMRLVEAIVLEGYRPSFDYYINYPYGLRIDWLPLFDYILAFPGLFLGFWASEIFAVVFPVIIGVLCIVLVYLISLEVLRNEKFALISAFIFSVCPVTVWKSLLGKADHHIWVVFLLLLSIWLVTKPGLLKLLSGIPMLLMALSWLGAPIYAALLAVSSLFQFNEKEVRIVGISNLIPVLSSIQNLFLGFSFLAIAVFLLVGSFVKRFERRFRYAIVYYLCICSVALLSAYLMPVGWLGFVKSGISYVLGTDIYLPTIREARSFQILGVISSAGYLFFVLAIPALFMLRNGFLKVFFVLSFLISILQLRFVEVLAFPVAILASYTICQILERVDYPVFRKEEEGESKRRGRKEKKKAVEIRKKDHATVIAFLLFLALPCFANSLAPVEMTMDWKEALNWMKENLEAQDYLKAYEKPDYAVLSWWDYGNWILYVAKKAVVCNNFQAGADDAAKFFTAQSEEEAMKIVEKRKVRYVVTVEELTVKPETNKTKFIPIMQIAGYSPEYMKNKEIIDFFNKTMLYKLHVENATNLTHFRLLKNFGTVKIFEVK.

The Cytoplasmic segment spans residues 1–12 (MTPVGMDRKSLS). The chain crosses the membrane as a helical span at residues 13–33 (LLILIVLLGLCIRLQNFGEIF). Residues 34-98 (DSRIYYYGYD…GLFLGFWASE (65 aa)) are Extracellular-facing. A DXD motif 1 motif is present at residues 41–43 (GYD). A Mn(2+)-binding site is contributed by Asp-43. Residues 99 to 119 (IFAVVFPVIIGVLCIVLVYLI) form a helical membrane-spanning segment. Residues 120–128 (SLEVLRNEK) lie on the Cytoplasmic side of the membrane. Residues 129 to 149 (FALISAFIFSVCPVTVWKSLL) traverse the membrane as a helical segment. At 150 to 154 (GKADH) the chain is on the extracellular side. Residue Asp-153 coordinates Mn(2+). Positions 153–155 (DHH) match the DXD motif 2 motif. His-154 contributes to the a glycophospholipid binding site. His-155 provides a ligand contact to Mn(2+). Residues 155–175 (HIWVVFLLLLSIWLVTKPGLL) form a helical membrane-spanning segment. Residues 176–180 (KLLSG) lie on the Cytoplasmic side of the membrane. A helical membrane pass occupies residues 181-201 (IPMLLMALSWLGAPIYAALLA). The Extracellular segment spans residues 202-229 (VSSLFQFNEKEVRIVGISNLIPVLSSIQ). A helical transmembrane segment spans residues 230 to 250 (NLFLGFSFLAIAVFLLVGSFV). Over 251 to 265 (KRFERRFRYAIVYYL) the chain is Cytoplasmic. The helical transmembrane segment at 266–286 (CICSVALLSAYLMPVGWLGFV) threads the bilayer. At 287 to 310 (KSGISYVLGTDIYLPTIREARSFQ) the chain is on the extracellular side. Positions 302–305 (TIRE) match the TIXE motif motif. A helical transmembrane segment spans residues 311 to 331 (ILGVISSAGYLFFVLAIPALF). Position 332 (Met-332) is a topological domain, cytoplasmic. A helical membrane pass occupies residues 333–353 (LRNGFLKVFFVLSFLISILQL). A topological domain (extracellular) is located at residue Arg-354. Arg-354 serves as a coordination point for a glycophospholipid. Residues 355–375 (FVEVLAFPVAILASYTICQIL) traverse the membrane as a helical segment. The Cytoplasmic segment spans residues 376–411 (ERVDYPVFRKEEEGESKRRGRKEKKKAVEIRKKDHA). Residues 412–432 (TVIAFLLFLALPCFANSLAPV) traverse the membrane as a helical segment. At 433 to 593 (EMTMDWKEAL…FGTVKIFEVK (161 aa)) the chain is on the extracellular side. Residues 468–470 (WWD) form an interacts with target acceptor peptide in protein substrate region. A WWDYG motif motif is present at residues 468 to 472 (WWDYG). A DKi motif motif is present at residues 524 to 539 (ELTVKPETNKTKFIPI).

It belongs to the STT3 family. It depends on Mn(2+) as a cofactor. Requires Mg(2+) as cofactor. Zn(2+) is required as a cofactor.

Its subcellular location is the cell membrane. The catalysed reaction is an archaeal dolichyl phosphooligosaccharide + [protein]-L-asparagine = an archaeal dolichyl phosphate + a glycoprotein with the oligosaccharide chain attached by N-beta-D-glycosyl linkage to a protein L-asparagine.. The protein operates within protein modification; protein glycosylation. Functionally, oligosaccharyl transferase (OST) that catalyzes the initial transfer of a defined glycan (a GalNAc-linked heptasaccharide composed of 4 Hex, 3 dHex and a sulfate for A.fulgidus AglB-S) from the lipid carrier dolichol-monophosphate to an asparagine residue within an Asn-X-Ser/Thr consensus motif in nascent polypeptide chains, the first step in protein N-glycosylation. The chain is Dolichyl-phosphooligosaccharide-protein glycotransferase 2 (aglB2) from Archaeoglobus fulgidus (strain ATCC 49558 / DSM 4304 / JCM 9628 / NBRC 100126 / VC-16).